A 430-amino-acid chain; its full sequence is Asparagine--tRNA ligase (430 aa).

Belongs to the class-II aminoacyl-tRNA synthetase family. Homodimer.

Its subcellular location is the cytoplasm. It catalyses the reaction tRNA(Asn) + L-asparagine + ATP = L-asparaginyl-tRNA(Asn) + AMP + diphosphate + H(+). The protein is Asparagine--tRNA ligase of Listeria innocua serovar 6a (strain ATCC BAA-680 / CLIP 11262).